The following is a 435-amino-acid chain: Serine protease snk (435 aa).

Positions 1–27 (MIILWSLIVHLQLTCLHLILQTPNLEA) are cleaved as a signal peptide. One can recognise a Clip domain in the interval 92–138 (FCRRSFDGRSGYCILAYQCLHVIREYRVHGTRIDICTHRNNVPVICC). 7 disulfide bridges follow: C93–C137, C104–C127, C110–C138, C179–C303, C220–C236, C346–C366, and C377–C408. The Peptidase S1 domain maps to 186–432 (IVGGTPTRHG…YLDWIEKIAF (247 aa)). The Charge relay system role is filled by H235. A glycan (N-linked (GlcNAc...) asparagine) is linked at N255. Catalysis depends on D283, which acts as the Charge relay system. S381 (charge relay system) is an active-site residue.

The protein belongs to the peptidase S1 family. CLIP subfamily. Interacts (via N-terminal prodomain) with ea/easter (via Peptidase domain); leads to proteolytic activation of ea by snk. This interaction does not require sulfation of a vitelline membrane component by pip but proteolytic cleavage of ea by snk does. In terms of processing, proteolytically activated by gd. May also be cleaved by another protease.

The protein localises to the secreted. In terms of biological role, component of the extracellular signaling pathway that establishes the dorsal-ventral pathway of the embryo. A protease cascade involving ndl, gd, snk and ea results in activation of the spz Toll receptor ligand; acts downstream of ndl and gd. Activation of ea requires both activation of the ndl-gd-snk protease cascade and sulfation of a vitelline membrane component by pip. Localized activation of the Toll receptor in the ventral region of the embryo defines cell identities along the dorsal-ventral continuum. The polypeptide is Serine protease snk (Drosophila melanogaster (Fruit fly)).